The following is a 410-amino-acid chain: 23S rRNA (uracil(747)-C(5))-methyltransferase (410 aa).

The [4Fe-4S] cluster site is built by Cys-61, Cys-67, Cys-70, and Cys-137. Residues Gln-253, Tyr-279, Glu-300, and Asp-341 each coordinate S-adenosyl-L-methionine. Cys-367 (nucleophile) is an active-site residue.

Belongs to the class I-like SAM-binding methyltransferase superfamily. RNA M5U methyltransferase family.

The catalysed reaction is uridine(747) in 23S rRNA + S-adenosyl-L-methionine = 5-methyluridine(747) in 23S rRNA + S-adenosyl-L-homocysteine + H(+). With respect to regulation, activated by magnesium ions. In terms of biological role, catalyzes the formation of 5-methyl-uridine at position equivalent to 747 (m5U747) in 23S rRNA (m5U859 in the P.abyssi numbering). In Pyrococcus abyssi (strain GE5 / Orsay), this protein is 23S rRNA (uracil(747)-C(5))-methyltransferase.